We begin with the raw amino-acid sequence, 375 residues long: Tyrosine--tRNA ligase (375 aa).

5 residues coordinate L-tyrosine: Tyr37, Tyr168, Gln172, Asp175, and Gln190. Residues 251–255 (KMSKS) carry the 'KMSKS' region motif. Lys254 contacts ATP.

The protein belongs to the class-I aminoacyl-tRNA synthetase family. TyrS type 4 subfamily. As to quaternary structure, homodimer.

Its subcellular location is the cytoplasm. The enzyme catalyses tRNA(Tyr) + L-tyrosine + ATP = L-tyrosyl-tRNA(Tyr) + AMP + diphosphate + H(+). In terms of biological role, catalyzes the attachment of tyrosine to tRNA(Tyr) in a two-step reaction: tyrosine is first activated by ATP to form Tyr-AMP and then transferred to the acceptor end of tRNA(Tyr). This is Tyrosine--tRNA ligase from Pyrococcus horikoshii (strain ATCC 700860 / DSM 12428 / JCM 9974 / NBRC 100139 / OT-3).